Consider the following 174-residue polypeptide: Protein COFACTOR ASSEMBLY OF COMPLEX C SUBUNIT B CCB3, chloroplastic (174 aa).

A chloroplast-targeting transit peptide spans 1 to 39 (MTTVTTSFVSFSPALMIFQKKSRRSSPNFRNRSTSLPIV). Over 40–78 (SATLSHIEEAATTTNLIRQTNSISESLRNISLADLDPGT) the chain is Lumenal. Residues 79-99 (AKLAIGILGPALSAFGFLFIL) traverse the membrane as a helical segment. The Stromal portion of the chain corresponds to 100 to 147 (RIVMSWYPKLPVDKFPYVLAYAPTEPILVQTRKVIPPLAGVDVTPVVW). Residues 148–168 (FGLVSFLSEILVGPQGLLVLV) form a helical membrane-spanning segment. Topologically, residues 169 to 174 (SQQQVN) are lumenal.

It belongs to the YggT family.

The protein resides in the plastid. Its subcellular location is the chloroplast thylakoid membrane. Functionally, required for the biogenesis and accumulation of native cytochrome b6 in the thylakoid membrane. Controls the conversion of apocytochrome b6 to holocytochrome b6. Required for covalent binding of the c-type heme to cytochrome b6. The chain is Protein COFACTOR ASSEMBLY OF COMPLEX C SUBUNIT B CCB3, chloroplastic from Arabidopsis thaliana (Mouse-ear cress).